The chain runs to 136 residues: Diuretic hormone 41 (136 aa).

The N-terminal stretch at 1–26 (MMWWAVWCAAMVAGSVFTAAAPPTDS) is a signal peptide. Positions 27 to 76 (IDLMQMDPSLADDESLGFAMQSLSGRYAAAPWLYLLADVSHDPQNGSDRV) are excised as a propeptide. I119 is subject to Isoleucine amide. Positions 123–136 (GFHWAPSAKAAKFY) are excised as a propeptide.

This sequence belongs to the sauvagine/corticotropin-releasing factor/urotensin I family.

It localises to the secreted. Its function is as follows. Regulation of fluid secretion. In Bombyx mori (Silk moth), this protein is Diuretic hormone 41 (dh41).